Here is a 317-residue protein sequence, read N- to C-terminus: tRNA dimethylallyltransferase (317 aa).

14 to 21 (GPTAVGKT) is an ATP binding site. Residue 16 to 21 (TAVGKT) participates in substrate binding. Positions 39–42 (DSMQ) are interaction with substrate tRNA.

Belongs to the IPP transferase family. Monomer. Mg(2+) is required as a cofactor.

It catalyses the reaction adenosine(37) in tRNA + dimethylallyl diphosphate = N(6)-dimethylallyladenosine(37) in tRNA + diphosphate. Catalyzes the transfer of a dimethylallyl group onto the adenine at position 37 in tRNAs that read codons beginning with uridine, leading to the formation of N6-(dimethylallyl)adenosine (i(6)A). This is tRNA dimethylallyltransferase from Bacillus mycoides (strain KBAB4) (Bacillus weihenstephanensis).